A 288-amino-acid polypeptide reads, in one-letter code: Single myb histone 4 (288 aa).

3 disordered regions span residues 1–42, 62–87, and 181–206; these read MGAP…PVLS, GLGS…SQPL, and DSLA…KPSK. The HTH myb-type domain occupies 1–60; it reads MGAPKQKWTSEEEDALRAGVRKHGAGKWRTIQKDPEFSPVLSSRSNIDLKDKWRNLSFSA. A DNA-binding region (H-T-H motif) is located at residues 28–56; the sequence is WRTIQKDPEFSPVLSSRSNIDLKDKWRNL. A compositionally biased stretch (low complexity) spans 76 to 87; it reads PSSSPSSSSQPL. In terms of domain architecture, H15 spans 113–181; sequence TLPKYGAMIM…KIDKSYRLPD (69 aa). Residues 230 to 250 are a coiled coil; the sequence is KVADAEAKAHDAHDQTMEAER.

The protein belongs to the histone H1/H5 family. SMH subfamily. In terms of assembly, forms a homodimer and heterodimers.

The protein localises to the nucleus. Its subcellular location is the chromosome. It localises to the nucleolus. The protein resides in the telomere. In terms of biological role, binds preferentially double-stranded telomeric repeats, but may also bind to the single telomeric strand. The polypeptide is Single myb histone 4 (SMH4) (Zea mays (Maize)).